The primary structure comprises 354 residues: tRNA N6-adenosine threonylcarbamoyltransferase (354 aa).

2 residues coordinate Fe cation: histidine 111 and histidine 115. Substrate is bound by residues 134–138 (LVSGG), aspartate 167, glycine 180, and asparagine 279. Aspartate 319 contributes to the Fe cation binding site.

The protein belongs to the KAE1 / TsaD family. The cofactor is Fe(2+).

Its subcellular location is the cytoplasm. It catalyses the reaction L-threonylcarbamoyladenylate + adenosine(37) in tRNA = N(6)-L-threonylcarbamoyladenosine(37) in tRNA + AMP + H(+). In terms of biological role, required for the formation of a threonylcarbamoyl group on adenosine at position 37 (t(6)A37) in tRNAs that read codons beginning with adenine. Is involved in the transfer of the threonylcarbamoyl moiety of threonylcarbamoyl-AMP (TC-AMP) to the N6 group of A37, together with TsaE and TsaB. TsaD likely plays a direct catalytic role in this reaction. In Neisseria meningitidis serogroup A / serotype 4A (strain DSM 15465 / Z2491), this protein is tRNA N6-adenosine threonylcarbamoyltransferase.